Here is a 304-residue protein sequence, read N- to C-terminus: GMP synthase [glutamine-hydrolyzing] subunit B (304 aa).

Residues 2–183 (VKVEKFIPNA…LDLPEEICER (182 aa)) enclose the GMPS ATP-PPase domain. Residue 28 to 34 (SGGVDSS) participates in ATP binding.

Heterodimer composed of a glutamine amidotransferase subunit (A) and a GMP-binding subunit (B).

The catalysed reaction is XMP + L-glutamine + ATP + H2O = GMP + L-glutamate + AMP + diphosphate + 2 H(+). Its pathway is purine metabolism; GMP biosynthesis; GMP from XMP (L-Gln route): step 1/1. Functionally, catalyzes the synthesis of GMP from XMP. The protein is GMP synthase [glutamine-hydrolyzing] subunit B of Methanococcoides burtonii (strain DSM 6242 / NBRC 107633 / OCM 468 / ACE-M).